Here is a 138-residue protein sequence, read N- to C-terminus: Mu-like prophage FluMu G protein 2 (138 aa).

The protein to phage Mu protein G.

This chain is Mu-like prophage FluMu G protein 2, found in Haemophilus influenzae (strain ATCC 51907 / DSM 11121 / KW20 / Rd).